Reading from the N-terminus, the 155-residue chain is Small ribosomal subunit protein uS7c (155 aa).

This sequence belongs to the universal ribosomal protein uS7 family. In terms of assembly, part of the 30S ribosomal subunit.

It localises to the plastid. Its subcellular location is the chloroplast. In terms of biological role, one of the primary rRNA binding proteins, it binds directly to 16S rRNA where it nucleates assembly of the head domain of the 30S subunit. The chain is Small ribosomal subunit protein uS7c (rps7) from Silene latifolia (White campion).